The sequence spans 109 residues: Nucleoid-associated protein HD_0326 (109 aa).

It belongs to the YbaB/EbfC family. Homodimer.

The protein localises to the cytoplasm. It localises to the nucleoid. Functionally, binds to DNA and alters its conformation. May be involved in regulation of gene expression, nucleoid organization and DNA protection. This chain is Nucleoid-associated protein HD_0326, found in Haemophilus ducreyi (strain 35000HP / ATCC 700724).